A 674-amino-acid polypeptide reads, in one-letter code: Polyunsaturated fatty acid 5-lipoxygenase (674 aa).

The PLAT domain occupies 2–118 (PSYTVTVATG…EVVLRDGRAK (117 aa)). Residues Gly17, Thr18, Asp19, Asn44, Asp45, Glu47, Asp79, and Asp80 each contribute to the Ca(2+) site. The Lipoxygenase domain occupies 119–674 (LARDDQIHIL…PDRIPNSVAI (556 aa)). At Ser272 the chain carries Phosphoserine; by MAPKAPK2. Fe cation-binding residues include His368 and His373. Ser524 carries the post-translational modification Phosphoserine; by PKA. Fe cation-binding residues include His551, Asn555, and Ile674.

This sequence belongs to the lipoxygenase family. As to quaternary structure, homodimer. Interacts with ALOX5AP and LTC4S. Interacts with COTL1, the interaction is required for stability and efficient catalytic activity. Interacts with PIK3R1; this interaction bridges ALOX5 with CD40 after CD40 ligation in B cells and leads to the production of reactive oxygen species (ROS). Interacts (via PLAT domain) with DICER1 (via Dicer dsRNA-binding fold domain); this interaction enhances arachidonate 5-lipoxygenase activity and modifies the miRNA precursor processing activity of DICER1. The cofactor is Fe cation. In terms of processing, serine phosphorylation by MAPKAPK2 is stimulated by arachidonic acid. Phosphorylation on Ser-524 by PKA has an inhibitory effect. Phosphorylation on Ser-272 prevents export from the nucleus. Phosphorylation at Ser-524 is stimulated by 8-bromo-3',5'-cyclic AMP or prostaglandin E2.

It localises to the cytoplasm. Its subcellular location is the nucleus matrix. The protein resides in the nucleus membrane. The protein localises to the perinuclear region. It is found in the cytosol. It localises to the nucleus envelope. Its subcellular location is the nucleus intermembrane space. It carries out the reaction (5Z,8Z,11Z,14Z)-eicosatetraenoate + O2 = leukotriene A4 + H2O. It catalyses the reaction 18-HEPE + O2 = (5S)-hydroperoxy-18-hydroxy-(7E,9E,11Z,14Z,16E)-eicosapentaenoate. The catalysed reaction is (18R)-hydroxy-(5Z,8Z,11Z,14Z,16E)-eicosapentaenoate + O2 = (5S)-hydroperoxy-(18R)-hydroxy-(6E,8Z,11Z,14Z,16E)-eicosapentaenoate. The enzyme catalyses (18S)-hydroxy-(5Z,8Z,11Z,14Z,16E)-eicosapentaenoate + O2 = (5S)-hydroperoxy-(18S)-hydroxy-(6E,8Z,11Z,14Z,16E)-eicosapentaenoate. It carries out the reaction (5S)-hydroperoxy-(18S)-hydroxy-(6E,8Z,11Z,14Z,16E)-eicosapentaenoate = (5S,6S)-epoxy-(18S)-hydroxy-(7E,9E,11Z,14Z,16E)-eicosapentaenoate + H2O. It catalyses the reaction (5S)-hydroperoxy-(18R)-hydroxy-(6E,8Z,11Z,14Z,16E)-eicosapentaenoate = (5S,6S)-epoxy-(18R)-hydroxy-(7E,9E,11Z,14Z,16E)-eicosapentaenoate + H2O. The catalysed reaction is (5S)-hydroperoxy-18-hydroxy-(7E,9E,11Z,14Z,16E)-eicosapentaenoate = (5S,6S)-epoxy-18-hydroxy-(7E,9E,11Z,14Z,16E)-eicosapentaenoate + H2O. The enzyme catalyses (5Z,8Z,11Z,14Z)-eicosatetraenoate + O2 = (5S)-hydroperoxy-(6E,8Z,11Z,14Z)-eicosatetraenoate. It carries out the reaction (15S)-hydroxy-(5Z,8Z,11Z,13E)-eicosatetraenoate + O2 = (5S)-hydroperoxy-(15S)-hydroxy-(6E,8Z,11Z,13E)-eicosatetraenoate. It catalyses the reaction (5S)-hydroperoxy-(6E,8Z,11Z,14Z)-eicosatetraenoate = leukotriene A4 + H2O. The catalysed reaction is (5Z,8Z,11Z,14Z)-eicosatetraenoate + O2 = (8S)-hydroperoxy-(5Z,9E,11Z,14Z)-eicosatetraenoate. The enzyme catalyses (5Z,8Z,11Z,14Z)-eicosatetraenoate + O2 = (12S)-hydroperoxy-(5Z,8Z,10E,14Z)-eicosatetraenoate. It carries out the reaction (5Z,8Z)-eicosadienoate + O2 = (5S)-hydroperoxy-(6E,8Z)-eicosadienoate. It catalyses the reaction (12S)-hydroxy-(5Z,8Z,10E,14Z)-eicosatetraenoate + O2 = (5S)-hydroperoxy-(12S)-hydroxy-(6E,8Z,10E,14Z)-eicosatetraenoate. The catalysed reaction is (5Z,8Z,11Z,14Z,17Z)-eicosapentaenoate + O2 = 5-hydroperoxy-(6E,8Z,11Z,14Z,17Z)-eicosapentaenoate. The enzyme catalyses (4Z,7Z,10Z,13Z,16Z,19Z)-docosahexaenoate + O2 = (14S)-hydroperoxy-(4Z,7Z,10Z,12E,16Z,19Z)-docosahexaenoate. It carries out the reaction (4Z,7Z,10Z,13Z,16Z,19Z)-docosahexaenoate + O2 = (7S)-hydroperoxy-(4Z,8E,10Z,13Z,16Z,19Z)-docosahexaenoate. It catalyses the reaction (4Z,7Z,10Z,13Z,16Z,19Z)-docosahexaenoate + O2 = (17S)-hydroperoxy-(4Z,7Z,10Z,13Z,15E,19Z)-docosahexaenoate. Its pathway is lipid metabolism; leukotriene A4 biosynthesis. Undergoes a sequential loss of the oxygenase and pseudoperoxidase activities which is dependent on the structural characteristics of the substrate for the reaction, on oxygen concentration and on exposure to phospholipids and calcium. 15-HETE and other 15-mono-hydroxyeicosanoids exhibit the highest inhibitory potencies in their capability of suppressing 5-lipoxygenation of arachidonic acid, whereas the other HETEs, (5S,15S)-dihydroxy-(6E,8Z,11Z,13E)-eicosatetraenoic acid (5,15-diHETE) as well as octadecanoids, are modest or poor inhibitors. The formation of (5S)-hydroperoxy-(15S)-hydroxy-(6E,8Z,11Z,13E)-eicosatetraenoate is strongly stimulated by either hydroperoxypolyenoic fatty acids or arachidonic acid. Arachidonate 5-lipoxygenase and leukotriene A4 synthase activities are allosterically increased by ATP. Catalyzes the oxygenation of arachidonate ((5Z,8Z,11Z,14Z)-eicosatetraenoate) to 5-hydroperoxyeicosatetraenoate (5-HPETE) followed by the dehydration to 5,6- epoxyeicosatetraenoate (Leukotriene A4/LTA4), the first two steps in the biosynthesis of leukotrienes, which are potent mediators of inflammation. Also catalyzes the oxygenation of arachidonate into 8-hydroperoxyicosatetraenoate (8-HPETE) and 12-hydroperoxyicosatetraenoate (12-HPETE). Displays lipoxin synthase activity being able to convert (15S)-HETE into a conjugate tetraene. Although arachidonate is the preferred substrate, this enzyme can also metabolize oxidized fatty acids derived from arachidonate such as (15S)-HETE, eicosapentaenoate (EPA) such as (18R)- and (18S)-HEPE or docosahexaenoate (DHA) which lead to the formation of specialized pro-resolving mediators (SPM) lipoxin and resolvins E and D respectively, therefore it participates in anti-inflammatory responses. Oxidation of DHA directly inhibits endothelial cell proliferation and sprouting angiogenesis via peroxisome proliferator-activated receptor gamma (PPARgamma). It does not catalyze the oxygenation of linoleic acid and does not convert (5S)-HETE to lipoxin isomers. In addition to inflammatory processes, it participates in dendritic cell migration, wound healing through an antioxidant mechanism based on heme oxygenase-1 (HO-1) regulation expression, monocyte adhesion to the endothelium via ITGAM expression on monocytes. Moreover, it helps establish an adaptive humoral immunity by regulating primary resting B cells and follicular helper T cells and participates in the CD40-induced production of reactive oxygen species (ROS) after CD40 ligation in B cells through interaction with PIK3R1 that bridges ALOX5 with CD40. May also play a role in glucose homeostasis, regulation of insulin secretion and palmitic acid-induced insulin resistance via AMPK. Can regulate bone mineralization and fat cell differentiation increases in induced pluripotent stem cells. The sequence is that of Polyunsaturated fatty acid 5-lipoxygenase from Homo sapiens (Human).